A 322-amino-acid polypeptide reads, in one-letter code: Nodulation protein D 1 (322 aa).

One can recognise an HTH lysR-type domain in the interval 6 to 63; sequence LDLNLLVALDALMTERKLTAAARSINLSQPAMSAAITRLRTYFRDELFTMNGRELVPT. The segment at residues 23 to 42 is a DNA-binding region (H-T-H motif); it reads LTAAARSINLSQPAMSAAIT.

The protein belongs to the LysR transcriptional regulatory family.

Its function is as follows. Regulates the expression of the nod abcFE genes which encode other nodulation proteins. NodD is also a negative regulator of its own expression. Binds flavonoids as inducers. The protein is Nodulation protein D 1 (nodD1) of Sinorhizobium fredii (strain NBRC 101917 / NGR234).